A 202-amino-acid polypeptide reads, in one-letter code: Probable cobalt-precorrin-6B C(15)-methyltransferase (decarboxylating) (202 aa).

Residues threonine 29, 53–57 (GCGSG), aspartate 77, and valine 106 each bind S-adenosyl-L-methionine.

The protein belongs to the methyltransferase superfamily. Archaeal-type CbiT family.

It carries out the reaction Co-precorrin-6B + S-adenosyl-L-methionine = Co-precorrin-7 + S-adenosyl-L-homocysteine + CO2. Its pathway is cofactor biosynthesis; adenosylcobalamin biosynthesis; cob(II)yrinate a,c-diamide from sirohydrochlorin (anaerobic route): step 8/10. Its function is as follows. Catalyzes the methylation of C-15 in cobalt-precorrin-6B followed by the decarboxylation of C-12 to form cobalt-precorrin-7. The chain is Probable cobalt-precorrin-6B C(15)-methyltransferase (decarboxylating) from Thermoplasma acidophilum (strain ATCC 25905 / DSM 1728 / JCM 9062 / NBRC 15155 / AMRC-C165).